The chain runs to 180 residues: Endoribonuclease YbeY (180 aa).

Zn(2+) contacts are provided by H118, H122, and H128.

This sequence belongs to the endoribonuclease YbeY family. It depends on Zn(2+) as a cofactor.

Its subcellular location is the cytoplasm. Single strand-specific metallo-endoribonuclease involved in late-stage 70S ribosome quality control and in maturation of the 3' terminus of the 16S rRNA. This chain is Endoribonuclease YbeY, found in Rhodococcus opacus (strain B4).